We begin with the raw amino-acid sequence, 476 residues long: Aspartyl/glutamyl-tRNA(Asn/Gln) amidotransferase subunit B (476 aa).

Belongs to the GatB/GatE family. GatB subfamily. As to quaternary structure, heterotrimer of A, B and C subunits.

The enzyme catalyses L-glutamyl-tRNA(Gln) + L-glutamine + ATP + H2O = L-glutaminyl-tRNA(Gln) + L-glutamate + ADP + phosphate + H(+). The catalysed reaction is L-aspartyl-tRNA(Asn) + L-glutamine + ATP + H2O = L-asparaginyl-tRNA(Asn) + L-glutamate + ADP + phosphate + 2 H(+). In terms of biological role, allows the formation of correctly charged Asn-tRNA(Asn) or Gln-tRNA(Gln) through the transamidation of misacylated Asp-tRNA(Asn) or Glu-tRNA(Gln) in organisms which lack either or both of asparaginyl-tRNA or glutaminyl-tRNA synthetases. The reaction takes place in the presence of glutamine and ATP through an activated phospho-Asp-tRNA(Asn) or phospho-Glu-tRNA(Gln). The sequence is that of Aspartyl/glutamyl-tRNA(Asn/Gln) amidotransferase subunit B from Clostridium kluyveri (strain ATCC 8527 / DSM 555 / NBRC 12016 / NCIMB 10680 / K1).